The following is a 210-amino-acid chain: ATP-dependent Clp protease proteolytic subunit (210 aa).

The active-site Nucleophile is the Ser107. His132 is an active-site residue.

This sequence belongs to the peptidase S14 family. In terms of assembly, fourteen ClpP subunits assemble into 2 heptameric rings which stack back to back to give a disk-like structure with a central cavity, resembling the structure of eukaryotic proteasomes.

Its subcellular location is the cytoplasm. The catalysed reaction is Hydrolysis of proteins to small peptides in the presence of ATP and magnesium. alpha-casein is the usual test substrate. In the absence of ATP, only oligopeptides shorter than five residues are hydrolyzed (such as succinyl-Leu-Tyr-|-NHMec, and Leu-Tyr-Leu-|-Tyr-Trp, in which cleavage of the -Tyr-|-Leu- and -Tyr-|-Trp bonds also occurs).. Functionally, cleaves peptides in various proteins in a process that requires ATP hydrolysis. Has a chymotrypsin-like activity. Plays a major role in the degradation of misfolded proteins. This chain is ATP-dependent Clp protease proteolytic subunit, found in Chromobacterium violaceum (strain ATCC 12472 / DSM 30191 / JCM 1249 / CCUG 213 / NBRC 12614 / NCIMB 9131 / NCTC 9757 / MK).